The primary structure comprises 463 residues: Cytochrome P450 4d8 (463 aa).

Residues E267 and C409 each coordinate heme.

This sequence belongs to the cytochrome P450 family. The cofactor is heme.

Its subcellular location is the endoplasmic reticulum membrane. The protein resides in the microsome membrane. Its function is as follows. May be involved in the metabolism of insect hormones and in the breakdown of synthetic insecticides. This is Cytochrome P450 4d8 (Cyp4d8) from Drosophila melanogaster (Fruit fly).